A 593-amino-acid polypeptide reads, in one-letter code: Probable tripeptidyl-peptidase SED3 (593 aa).

The N-terminal stretch at 1-18 (MLLRWHSVIPLFLTMTVA) is a signal peptide. The propeptide at 19–198 (LPNTYRTVVE…SLQVIYSSTN (180 aa)) is removed in mature form. Asparagine 198, asparagine 204, asparagine 261, and asparagine 275 each carry an N-linked (GlcNAc...) asparagine glycan. The Peptidase S53 domain maps to 206-592 (TITPRCLREL…RILAKIVQHM (387 aa)). Catalysis depends on charge relay system residues glutamate 282 and aspartate 286. N-linked (GlcNAc...) asparagine glycosylation is present at asparagine 295. Catalysis depends on serine 496, which acts as the Charge relay system. Residues aspartate 538 and isoleucine 539 each contribute to the Ca(2+) site. Asparagine 554 and asparagine 566 each carry an N-linked (GlcNAc...) asparagine glycan. Ca(2+)-binding residues include glycine 570 and aspartate 572.

The cofactor is Ca(2+).

It is found in the secreted. Its subcellular location is the extracellular space. It catalyses the reaction Release of an N-terminal tripeptide from a polypeptide.. Functionally, secreted tripeptidyl-peptidase which degrades proteins at acidic pHs and is involved in virulence. This chain is Probable tripeptidyl-peptidase SED3 (SED3), found in Trichophyton verrucosum (strain HKI 0517).